The chain runs to 355 residues: Adenine deaminase (355 aa).

Residues H23, H25, and H211 each contribute to the Zn(2+) site. The active-site Proton donor is E214. D292 serves as a coordination point for Zn(2+). D293 serves as a coordination point for substrate.

This sequence belongs to the metallo-dependent hydrolases superfamily. Adenosine and AMP deaminases family. Adenine deaminase type 2 subfamily. Requires Zn(2+) as cofactor.

The protein localises to the cytoplasm. The protein resides in the nucleus. It carries out the reaction adenine + H2O + H(+) = hypoxanthine + NH4(+). Catalyzes the hydrolytic deamination of adenine to hypoxanthine. Plays an important role in the purine salvage pathway and in nitrogen catabolism. The protein is Adenine deaminase of Kluyveromyces lactis (strain ATCC 8585 / CBS 2359 / DSM 70799 / NBRC 1267 / NRRL Y-1140 / WM37) (Yeast).